We begin with the raw amino-acid sequence, 141 residues long: Lutropin subunit beta (141 aa).

The signal sequence occupies residues 1–20; that stretch reads MEMLQGLLLWLLLSVGGVWA. 6 cysteine pairs are disulfide-bonded: C29–C77, C43–C92, C46–C130, C54–C108, C58–C110, and C113–C120. The N-linked (GlcNAc...) asparagine glycan is linked to N33.

The protein belongs to the glycoprotein hormones subunit beta family. As to quaternary structure, heterodimer of a common alpha chain and a unique beta chain which confers biological specificity to thyrotropin, lutropin, follitropin and gonadotropin.

The protein resides in the secreted. In terms of biological role, promotes spermatogenesis and ovulation by stimulating the testes and ovaries to synthesize steroids. The polypeptide is Lutropin subunit beta (LHB1) (Ceratotherium simum (White rhinoceros)).